Reading from the N-terminus, the 289-residue chain is Syntaxin-2 (289 aa).

Residues 1–265 (MRDRLPDLTA…KYQSKARRKK (265 aa)) lie on the Cytoplasmic side of the membrane. A coiled-coil region spans residues 68–101 (EGKIKEELEDLDKEIKKTANRIRGKLKSIEQSCD). In terms of domain architecture, t-SNARE coiled-coil homology spans 192–254 (LNEIESRHKD…EHAKEETKKA (63 aa)). Residues 266-289 (WIIAAVAVAVIAVLALIIGLSVGK) traverse the membrane as a helical; Anchor for type IV membrane protein segment.

The protein belongs to the syntaxin family. In terms of assembly, interacts with SYT6 and SYT8; the interaction is Ca(2+)-dependent.

It localises to the membrane. Its function is as follows. Essential for epithelial morphogenesis. May mediate Ca(2+)-regulation of exocytosis acrosomal reaction in sperm. This is Syntaxin-2 (Stx2) from Mus musculus (Mouse).